Consider the following 478-residue polypeptide: Sulfate adenylyltransferase subunit 1 (478 aa).

Positions 24–240 (KSMLRFLTCG…VLEDIDIDAD (217 aa)) constitute a tr-type G domain. Residues 33–40 (GSVDDGKS) are G1. 33-40 (GSVDDGKS) is a GTP binding site. Residues 91-95 (GITID) form a G2 region. Residues 112–115 (DTPG) form a G3 region. GTP-binding positions include 112 to 116 (DTPGH) and 167 to 170 (NKMD). Positions 167 to 170 (NKMD) are G4. The tract at residues 206–208 (SAL) is G5.

This sequence belongs to the TRAFAC class translation factor GTPase superfamily. Classic translation factor GTPase family. CysN/NodQ subfamily. As to quaternary structure, heterodimer composed of CysD, the smaller subunit, and CysN.

It catalyses the reaction sulfate + ATP + H(+) = adenosine 5'-phosphosulfate + diphosphate. Its pathway is sulfur metabolism; hydrogen sulfide biosynthesis; sulfite from sulfate: step 1/3. With CysD forms the ATP sulfurylase (ATPS) that catalyzes the adenylation of sulfate producing adenosine 5'-phosphosulfate (APS) and diphosphate, the first enzymatic step in sulfur assimilation pathway. APS synthesis involves the formation of a high-energy phosphoric-sulfuric acid anhydride bond driven by GTP hydrolysis by CysN coupled to ATP hydrolysis by CysD. This is Sulfate adenylyltransferase subunit 1 from Aliivibrio salmonicida (strain LFI1238) (Vibrio salmonicida (strain LFI1238)).